The primary structure comprises 307 residues: Taste receptor type 2 member 106 (307 aa).

The Extracellular portion of the chain corresponds to M1 to G7. Residues I8 to L28 form a helical membrane-spanning segment. The Cytoplasmic portion of the chain corresponds to H29–S41. The chain crosses the membrane as a helical span at residues T42–I62. The Extracellular portion of the chain corresponds to S63–I81. Residues I82–L104 traverse the membrane as a helical segment. Residues F105–K124 are Cytoplasmic-facing. Residues L125–P145 traverse the membrane as a helical segment. Over Q146–N179 the chain is Extracellular. N159 carries N-linked (GlcNAc...) asparagine glycosylation. A helical membrane pass occupies residues L180–L200. The Cytoplasmic portion of the chain corresponds to W201–K227. Residues V228 to L248 traverse the membrane as a helical segment. Residues S249 to L257 are Extracellular-facing. A helical membrane pass occupies residues L258–I278. Over L279–T307 the chain is Cytoplasmic.

It belongs to the G-protein coupled receptor T2R family.

Its subcellular location is the membrane. Putative taste receptor which may play a role in the perception of bitterness. The chain is Taste receptor type 2 member 106 from Rattus norvegicus (Rat).